Here is a 249-residue protein sequence, read N- to C-terminus: uncharacterized protein (249 aa).

Belongs to the ycf73 family.

It is found in the plastid. It localises to the chloroplast. This is an uncharacterized protein from Oryza sativa (Rice).